A 1262-amino-acid chain; its full sequence is DNA-directed RNA polymerase subunit beta' (1262 aa).

Residues C220, C294, C301, and C304 each contribute to the Zn(2+) site.

The protein belongs to the RNA polymerase beta' chain family. RpoC2 subfamily. As to quaternary structure, in cyanobacteria the RNAP catalytic core is composed of 2 alpha, 1 beta, 1 beta', 1 gamma and 1 omega subunit. When a sigma factor is associated with the core the holoenzyme is formed, which can initiate transcription. Zn(2+) is required as a cofactor.

It catalyses the reaction RNA(n) + a ribonucleoside 5'-triphosphate = RNA(n+1) + diphosphate. DNA-dependent RNA polymerase catalyzes the transcription of DNA into RNA using the four ribonucleoside triphosphates as substrates. The protein is DNA-directed RNA polymerase subunit beta' of Gloeobacter violaceus (strain ATCC 29082 / PCC 7421).